Here is a 294-residue protein sequence, read N- to C-terminus: Agamous-like MADS-box protein AGL82 (294 aa).

The MADS-box domain maps to 1-51 (MVPKVVDLQRIANDKTRITTYKKRKASLYKKAQEFSTLCGVETCLIVYGPT).

As to quaternary structure, interacts with MEE14/CBP1.

The protein localises to the nucleus. Probable transcription factor that may function in the maintenance of the proper function of the central cell in pollen tube attraction. In Arabidopsis thaliana (Mouse-ear cress), this protein is Agamous-like MADS-box protein AGL82.